Here is a 203-residue protein sequence, read N- to C-terminus: Glycerol-3-phosphate acyltransferase (203 aa).

Helical transmembrane passes span 10-30 (LLLG…FGIM), 60-80 (LAAF…VFLA), 88-108 (AAQL…FLGF), 118-138 (LGTL…IWAI), and 162-182 (FTLG…LIFL).

Belongs to the PlsY family. As to quaternary structure, probably interacts with PlsX.

The protein resides in the cell inner membrane. The catalysed reaction is an acyl phosphate + sn-glycerol 3-phosphate = a 1-acyl-sn-glycero-3-phosphate + phosphate. It functions in the pathway lipid metabolism; phospholipid metabolism. Catalyzes the transfer of an acyl group from acyl-phosphate (acyl-PO(4)) to glycerol-3-phosphate (G3P) to form lysophosphatidic acid (LPA). This enzyme utilizes acyl-phosphate as fatty acyl donor, but not acyl-CoA or acyl-ACP. This Jannaschia sp. (strain CCS1) protein is Glycerol-3-phosphate acyltransferase.